We begin with the raw amino-acid sequence, 316 residues long: Pantothenate kinase (316 aa).

95 to 102 (GSVAVGKS) provides a ligand contact to ATP.

Belongs to the prokaryotic pantothenate kinase family.

It is found in the cytoplasm. It catalyses the reaction (R)-pantothenate + ATP = (R)-4'-phosphopantothenate + ADP + H(+). The protein operates within cofactor biosynthesis; coenzyme A biosynthesis; CoA from (R)-pantothenate: step 1/5. The sequence is that of Pantothenate kinase from Cronobacter sakazakii (strain ATCC BAA-894) (Enterobacter sakazakii).